We begin with the raw amino-acid sequence, 388 residues long: tRNA 2-selenouridine synthase (388 aa).

A Rhodanese domain is found at Phe-15 to Asp-138. Cys-98 acts as the S-selanylcysteine intermediate in catalysis.

This sequence belongs to the SelU family. Monomer.

The catalysed reaction is 5-methylaminomethyl-2-thiouridine(34) in tRNA + selenophosphate + (2E)-geranyl diphosphate + H2O + H(+) = 5-methylaminomethyl-2-selenouridine(34) in tRNA + (2E)-thiogeraniol + phosphate + diphosphate. It catalyses the reaction 5-methylaminomethyl-2-thiouridine(34) in tRNA + (2E)-geranyl diphosphate = 5-methylaminomethyl-S-(2E)-geranyl-thiouridine(34) in tRNA + diphosphate. It carries out the reaction 5-methylaminomethyl-S-(2E)-geranyl-thiouridine(34) in tRNA + selenophosphate + H(+) = 5-methylaminomethyl-2-(Se-phospho)selenouridine(34) in tRNA + (2E)-thiogeraniol. The enzyme catalyses 5-methylaminomethyl-2-(Se-phospho)selenouridine(34) in tRNA + H2O = 5-methylaminomethyl-2-selenouridine(34) in tRNA + phosphate. In terms of biological role, involved in the post-transcriptional modification of the uridine at the wobble position (U34) of tRNA(Lys), tRNA(Glu) and tRNA(Gln). Catalyzes the conversion of 2-thiouridine (S2U-RNA) to 2-selenouridine (Se2U-RNA). Acts in a two-step process involving geranylation of 2-thiouridine (S2U) to S-geranyl-2-thiouridine (geS2U) and subsequent selenation of the latter derivative to 2-selenouridine (Se2U) in the tRNA chain. The sequence is that of tRNA 2-selenouridine synthase from Nitrosomonas eutropha (strain DSM 101675 / C91 / Nm57).